The chain runs to 233 residues: Glycolipid transfer protein 3 (233 aa).

Residues aspartate 79, asparagine 83, tryptophan 126, and histidine 165 each coordinate a ganglioside GM3 (d18:1(4E)).

Belongs to the GLTP family.

Its function is as follows. May be involved in glycolipids transfer. The chain is Glycolipid transfer protein 3 from Arabidopsis thaliana (Mouse-ear cress).